The primary structure comprises 729 residues: Sorting nexin mvp1 (729 aa).

Disordered regions lie at residues 1 to 43 (MSLF…SANL) and 177 to 340 (PLPK…EEPN). Residues 356-464 (EETVTVNLLP…VMFLTVPTEL (109 aa)) enclose the PX domain. Positions 392, 394, 418, and 431 each coordinate a 1,2-diacyl-sn-glycero-3-phospho-(1D-myo-inositol-3-phosphate).

The protein belongs to the sorting nexin family.

The protein resides in the cytoplasm. It is found in the membrane. Its function is as follows. Required for vacuolar protein sorting. The protein is Sorting nexin mvp1 (mvp1) of Aspergillus fumigatus (strain ATCC MYA-4609 / CBS 101355 / FGSC A1100 / Af293) (Neosartorya fumigata).